The chain runs to 187 residues: UPF0340 protein SP_0663 (187 aa).

The protein belongs to the UPF0340 family.

This is UPF0340 protein SP_0663 from Streptococcus pneumoniae serotype 4 (strain ATCC BAA-334 / TIGR4).